We begin with the raw amino-acid sequence, 65 residues long: uncharacterized protein (65 aa).

This is an uncharacterized protein from Archaeoglobus fulgidus (strain ATCC 49558 / DSM 4304 / JCM 9628 / NBRC 100126 / VC-16).